The following is a 222-amino-acid chain: Zinc finger C2HC domain-containing protein 1B (222 aa).

Residues 14–43 (ELFPCEVCGRRFAADVLERHGPICKKLFNR) form a C2HC/C3H-type 1 zinc finger. Positions 18, 21, 33, and 37 each coordinate Zn(2+). The disordered stretch occupies residues 48–78 (FSSLKQRLQGTDIPTVKKTPQSKSPPVRKSN). The C2HC/C3H-type 2; degenerate zinc finger occupies 117–146 (DYIQRPYCMRRFNESAAERHTNFCKDQSSR). A disordered region spans residues 196 to 222 (PTKSGLAMDPASGAKLRQGFSKSSKKD).

Belongs to the ZC2HC1 family. Zn(2+) serves as cofactor.

This is Zinc finger C2HC domain-containing protein 1B (ZC2HC1B) from Homo sapiens (Human).